Reading from the N-terminus, the 518-residue chain is Glutamate--cysteine ligase (518 aa).

It belongs to the glutamate--cysteine ligase type 1 family. Type 1 subfamily.

The catalysed reaction is L-cysteine + L-glutamate + ATP = gamma-L-glutamyl-L-cysteine + ADP + phosphate + H(+). It participates in sulfur metabolism; glutathione biosynthesis; glutathione from L-cysteine and L-glutamate: step 1/2. In Salmonella agona (strain SL483), this protein is Glutamate--cysteine ligase.